Here is a 367-residue protein sequence, read N- to C-terminus: Molybdopterin synthase catalytic subunit (367 aa).

Substrate is bound by residues 101 to 102 (HR), lysine 117, and 124 to 126 (KKE). Positions 326–345 (HFTKREPSSMEAAPPKKIRK) are disordered.

It belongs to the MoaE family. MOCS2B subfamily. Heterotetramer; composed of 2 small (Mocs2A) and 2 large (Mocs2B) subunits.

Its subcellular location is the cytoplasm. It carries out the reaction 2 [molybdopterin-synthase sulfur-carrier protein]-C-terminal-Gly-aminoethanethioate + cyclic pyranopterin phosphate + H2O = molybdopterin + 2 [molybdopterin-synthase sulfur-carrier protein]-C-terminal Gly-Gly + 2 H(+). The protein operates within cofactor biosynthesis; molybdopterin biosynthesis. In terms of biological role, catalytic subunit of the molybdopterin synthase complex, a complex that catalyzes the conversion of precursor Z into molybdopterin. Acts by mediating the incorporation of 2 sulfur atoms from thiocarboxylated Mocs2A into precursor Z to generate a dithiolene group. This chain is Molybdopterin synthase catalytic subunit, found in Drosophila sechellia (Fruit fly).